The primary structure comprises 261 residues: RING finger protein 208 (261 aa).

Positions 83–106 (PALEGAPHTPPLPRRPRKGSSELG) are disordered. The residue at position 102 (Ser102) is a Phosphoserine. An RING-type zinc finger spans residues 143–190 (CPTCGHSYNVTQRRPRVLSCLHSVCEQCLQILYESCPKYKFISCPTCR).

This chain is RING finger protein 208 (RNF208), found in Homo sapiens (Human).